The sequence spans 1500 residues: Synaptonemal complex protein 2 (1500 aa).

A phosphoserine mark is found at Ser457 and Ser458. Thr464 carries the post-translational modification Phosphothreonine. Position 487 is a phosphoserine (Ser487). Thr496 carries the phosphothreonine modification. Ser500, Ser509, Ser518, and Ser527 each carry phosphoserine. Residues Lys512 to Thr548 are disordered. Phosphothreonine is present on residues Thr608 and Thr633. Residues Ser646, Ser650, and Ser741 each carry the phosphoserine modification. The segment at Asn796 to Pro820 is disordered. The residue at position 914 (Ser914) is a Phosphoserine. Thr916 bears the Phosphothreonine mark. Disordered regions lie at residues Leu940 to Ser1010 and Lys1029 to Val1084. The segment covering Asn948 to Arg958 has biased composition (basic residues). Basic and acidic residues predominate over residues Met977–Thr989. Basic residues predominate over residues Arg990–Lys1000. Basic and acidic residues predominate over residues Pro1059–Ser1076. Residues Ser1115, Ser1117, Ser1124, Ser1133, Ser1140, Ser1144, Ser1156, Ser1159, and Ser1164 each carry the phosphoserine modification. Thr1168 carries the post-translational modification Phosphothreonine. A phosphoserine mark is found at Ser1183, Ser1213, and Ser1216. The segment at Tyr1208 to Leu1234 is disordered. Over residues Cys1217–Asn1228 the composition is skewed to basic and acidic residues. A phosphoserine mark is found at Ser1232, Ser1275, and Ser1277. Position 1313 is a phosphothreonine (Thr1313). Positions Leu1388–Glu1429 form a coiled coil.

This sequence belongs to the SYCP2 family. In terms of assembly, component of the lateral elements of synaptonemal complexes. Heterodimer with SYCP3. Interacts with SMC1A and SMC3. Interacts with TEX11. Phosphorylated. In terms of tissue distribution, detected in testis and spermatocytes (at protein level).

It localises to the nucleus. It is found in the chromosome. In terms of biological role, major component of the axial/lateral elements of synaptonemal complexes (SCS) during meiotic prophase. Plays a role in the assembly of synaptonemal complexes. Required for normal meiotic chromosome synapsis during oocyte and spermatocyte development and for normal male and female fertility. Required for insertion of SYCP3 into synaptonemal complexes. May be involved in the organization of chromatin by temporarily binding to DNA scaffold attachment regions. Requires SYCP3, but not SYCP1, in order to be incorporated into the axial/lateral elements. This is Synaptonemal complex protein 2 (Sycp2) from Mus musculus (Mouse).